The chain runs to 682 residues: DNA-directed RNA polymerase subunit beta' (682 aa).

Residues cysteine 69, cysteine 71, cysteine 87, and cysteine 90 each coordinate Zn(2+). Aspartate 489, aspartate 491, and aspartate 493 together coordinate Mg(2+).

This sequence belongs to the RNA polymerase beta' chain family. RpoC1 subfamily. In terms of assembly, in plastids the minimal PEP RNA polymerase catalytic core is composed of four subunits: alpha, beta, beta', and beta''. When a (nuclear-encoded) sigma factor is associated with the core the holoenzyme is formed, which can initiate transcription. Mg(2+) is required as a cofactor. It depends on Zn(2+) as a cofactor.

The protein localises to the plastid. It localises to the chloroplast. The catalysed reaction is RNA(n) + a ribonucleoside 5'-triphosphate = RNA(n+1) + diphosphate. Functionally, DNA-dependent RNA polymerase catalyzes the transcription of DNA into RNA using the four ribonucleoside triphosphates as substrates. In Acorus gramineus (Dwarf sweet flag), this protein is DNA-directed RNA polymerase subunit beta'.